Consider the following 399-residue polypeptide: L-asparaginase-like protein GE13669 (399 aa).

The first 22 residues, 1 to 22 (MLAQSCCLRLLILLLLFKSTCS), serve as a signal peptide directing secretion. 3 disulfides stabilise this stretch: Cys-90–Cys-95, Cys-189–Cys-205, and Cys-344–Cys-371.

This sequence belongs to the Ntn-hydrolase family.

This Drosophila yakuba (Fruit fly) protein is L-asparaginase-like protein GE13669.